We begin with the raw amino-acid sequence, 648 residues long: 1-deoxy-D-xylulose-5-phosphate synthase 1 (648 aa).

Thiamine diphosphate is bound by residues His-82 and Ala-123–Ser-125. Residue Asp-154 coordinates Mg(2+). Residues Gly-155–Ser-156, Asn-183, Tyr-292, and Glu-374 each bind thiamine diphosphate. Asn-183 serves as a coordination point for Mg(2+).

This sequence belongs to the transketolase family. DXPS subfamily. Homodimer. Requires Mg(2+) as cofactor. It depends on thiamine diphosphate as a cofactor.

It carries out the reaction D-glyceraldehyde 3-phosphate + pyruvate + H(+) = 1-deoxy-D-xylulose 5-phosphate + CO2. The protein operates within metabolic intermediate biosynthesis; 1-deoxy-D-xylulose 5-phosphate biosynthesis; 1-deoxy-D-xylulose 5-phosphate from D-glyceraldehyde 3-phosphate and pyruvate: step 1/1. Its function is as follows. Catalyzes the acyloin condensation reaction between C atoms 2 and 3 of pyruvate and glyceraldehyde 3-phosphate to yield 1-deoxy-D-xylulose-5-phosphate (DXP). This Cereibacter sphaeroides (strain ATCC 17023 / DSM 158 / JCM 6121 / CCUG 31486 / LMG 2827 / NBRC 12203 / NCIMB 8253 / ATH 2.4.1.) (Rhodobacter sphaeroides) protein is 1-deoxy-D-xylulose-5-phosphate synthase 1.